Reading from the N-terminus, the 886-residue chain is DNA mismatch repair protein MutS (886 aa).

626-633 serves as a coordination point for ATP; sequence GPNMGGKS.

Belongs to the DNA mismatch repair MutS family.

Functionally, this protein is involved in the repair of mismatches in DNA. It is possible that it carries out the mismatch recognition step. This protein has a weak ATPase activity. This is DNA mismatch repair protein MutS from Burkholderia ambifaria (strain ATCC BAA-244 / DSM 16087 / CCUG 44356 / LMG 19182 / AMMD) (Burkholderia cepacia (strain AMMD)).